The sequence spans 443 residues: Dihydroorotate dehydrogenase (quinone), mitochondrial (443 aa).

The transit peptide at 1-21 (MYQRSLFRGVAQGLKRSSVRF) directs the protein to the mitochondrion. Residues 38–54 (WKLLSVIGSFTAGVAIY) traverse the membrane as a helical segment. FMN-binding positions include 122–126 (AGFDK) and Ser-146. Position 126 (Lys-126) interacts with substrate. A Phosphoserine modification is found at Ser-168. 171 to 175 (NRYGF) is a binding site for substrate. 2 residues coordinate FMN: Asn-234 and Asn-264. Residue 264-269 (NVSSPN) coordinates substrate. Ser-267 serves as the catalytic Nucleophile. FMN is bound at residue Lys-306. 335-336 (NT) lines the substrate pocket. FMN-binding positions include Gly-358, Gly-387, and 408–409 (YT).

Belongs to the dihydroorotate dehydrogenase family. Type 2 subfamily. FMN serves as cofactor.

The protein resides in the mitochondrion inner membrane. It carries out the reaction (S)-dihydroorotate + a quinone = orotate + a quinol. The protein operates within pyrimidine metabolism; UMP biosynthesis via de novo pathway; orotate from (S)-dihydroorotate (quinone route): step 1/1. Functionally, in the de novo pyrimidine biosynthesis pathway, catalyzes the stereospecific oxidation of (S)-dihydroorotate to orotate with reduction of flavin and the transfer of electrons to ubiquinone, which is part of the respiratory chain. Does not use fumarate and NAD as electron acceptors. This is Dihydroorotate dehydrogenase (quinone), mitochondrial (ura3) from Schizosaccharomyces pombe (strain 972 / ATCC 24843) (Fission yeast).